The chain runs to 507 residues: Peroxisomal membrane protein PEX14 (507 aa).

Polar residues-rich tracts occupy residues 1 to 10 (MATHQQTQPP) and 32 to 48 (EVQQ…SVFK). The tract at residues 1–52 (MATHQQTQPPSDFPALADENSQIPEATKPANEVQQATIAQDPPTSVFKNSEP) is disordered. The Peroxisomal segment spans residues 1-152 (MATHQQTQPP…QAAFLSRFRW (152 aa)). Involved in interaction with PEX5 regions lie at residues 58–65 (IQNAIKFL) and 78–97 (RRSF…EAFR). A helical membrane pass occupies residues 153–173 (YHAILAVGVLAASGAGTAVFI). Residues 174–507 (KRSLIPRFKS…EQQHISQEGN (334 aa)) are Cytoplasmic-facing. Residues 288 to 302 (VTTARKPYTNGSNVD) show a composition bias toward polar residues. Disordered regions lie at residues 288–329 (VTTA…PKSY), 344–394 (NIRE…NPRS), 409–435 (ANQN…QPPP), and 448–507 (PKPQ…QEGN). The span at 308–322 (ARSASPPAAPADSSA) shows a compositional bias: low complexity. A compositionally biased stretch (polar residues) spans 378 to 394 (QDESSNGQWWQQKNPRS).

This sequence belongs to the peroxin-14 family. In terms of assembly, interacts with PEX13; forming the PEX13-PEX14 docking complex. Interacts with PEX5 (via WxxxF/Y motifs). As to expression, expressed in flowers, siliques, leaves and roots.

Its subcellular location is the peroxisome membrane. Functionally, component of the PEX13-PEX14 docking complex, a translocon channel that specifically mediates the import of peroxisomal cargo proteins bound to PEX5 receptor. The PEX13-PEX14 docking complex forms a large import pore which can be opened to a diameter of about 9 nm. Mechanistically, PEX5 receptor along with cargo proteins associates with the PEX14 subunit of the PEX13-PEX14 docking complex in the cytosol, leading to the insertion of the receptor into the organelle membrane with the concomitant translocation of the cargo into the peroxisome matrix. The chain is Peroxisomal membrane protein PEX14 from Arabidopsis thaliana (Mouse-ear cress).